The sequence spans 153 residues: Cytochrome c-type biogenesis protein CcmE (153 aa).

The Cytoplasmic portion of the chain corresponds to 1 to 8 (MTPVQRRR). Residues 9–29 (LAWVLLALLASGLATALVAMA) form a helical; Signal-anchor for type II membrane protein membrane-spanning segment. Topologically, residues 30 to 153 (LERNIAYLYT…DVPVTAPEVR (124 aa)) are extracellular. The heme site is built by His123 and Tyr127.

Belongs to the CcmE/CycJ family.

It is found in the cell membrane. Functionally, heme chaperone required for the biogenesis of c-type cytochromes. Transiently binds heme delivered by CcmC and transfers the heme to apo-cytochromes in a process facilitated by CcmF and CcmH. The polypeptide is Cytochrome c-type biogenesis protein CcmE (Stenotrophomonas maltophilia (strain K279a)).